The following is a 279-amino-acid chain: Elongation factor Ts (279 aa).

Residues T79–V82 form an involved in Mg(2+) ion dislocation from EF-Tu region.

This sequence belongs to the EF-Ts family.

It is found in the cytoplasm. Its function is as follows. Associates with the EF-Tu.GDP complex and induces the exchange of GDP to GTP. It remains bound to the aminoacyl-tRNA.EF-Tu.GTP complex up to the GTP hydrolysis stage on the ribosome. This chain is Elongation factor Ts, found in Phytoplasma mali (strain AT).